We begin with the raw amino-acid sequence, 320 residues long: Ferrochelatase (320 aa).

Fe cation contacts are provided by H194 and E275.

This sequence belongs to the ferrochelatase family. As to quaternary structure, monomer.

Its subcellular location is the cytoplasm. The enzyme catalyses heme b + 2 H(+) = protoporphyrin IX + Fe(2+). Its pathway is porphyrin-containing compound metabolism; protoheme biosynthesis; protoheme from protoporphyrin-IX: step 1/1. In terms of biological role, catalyzes the ferrous insertion into protoporphyrin IX. The protein is Ferrochelatase of Shigella flexneri serotype 5b (strain 8401).